Consider the following 952-residue polypeptide: Probable RNA-binding protein 19 (952 aa).

The RRM 1 domain occupies 2–79 (SRLIVKNLPN…TRITVEFCKS (78 aa)). 3 disordered regions span residues 85-126 (KPRA…LEKL), 159-267 (KAKT…RGAV), and 367-395 (KQAPTARGPPKSTTPWQGRTLGENEEEED). A compositionally biased stretch (low complexity) spans 95-109 (KSSQPKQPSQDSVPS). Positions 163 to 180 (KASSDYLNFDSDSNSDSG) are enriched in polar residues. Phosphoserine is present on residues Ser-177, Ser-179, and Ser-183. 2 stretches are compositionally biased toward acidic residues: residues 181–196 (QESEEEPAREDPEEEQ) and 224–251 (SSEDEDEEDSEDEAVNCEEGSEEEEEEG). RRM domains lie at 293-368 (YTVK…REKQ) and 400-478 (GRLF…PSTI). Lys-479 participates in a covalent cross-link: Glycyl lysine isopeptide (Lys-Gly) (interchain with G-Cter in SUMO2). Positions 481–504 (EASQEANAPGSSYKKKKEAMDKAN) are disordered. Residues 584 to 656 (TVILAKNLPA…VPLYLEWAPI (73 aa)) form the RRM 4 domain. Positions 664-679 (QKKDSQHEQPAEKAEV) are enriched in basic and acidic residues. The segment at 664–719 (QKKDSQHEQPAEKAEVEQETVLDPEGEKASVEGAEASTGKMEEEEEEEEEEEEESI) is disordered. Ser-693 is modified (phosphoserine). Positions 705-718 (EEEEEEEEEEEEES) are enriched in acidic residues. 2 consecutive RRM domains span residues 722–803 (CTLF…ISER) and 824–904 (SKIL…WADS). Phosphoserine occurs at positions 928 and 944.

Belongs to the RRM MRD1 family. Expressed in the crypts of Lieberkuhn of the intestine (at protein level).

It is found in the nucleus. The protein localises to the nucleolus. Its subcellular location is the nucleoplasm. The protein resides in the cytoplasm. It localises to the chromosome. In terms of biological role, plays a role in embryo pre-implantation development. This Mus musculus (Mouse) protein is Probable RNA-binding protein 19 (Rbm19).